Here is a 498-residue protein sequence, read N- to C-terminus: Diacylglycerol O-acyltransferase 1 (498 aa).

The interval 1-66 is disordered; it reads MGDRGGAGSS…AHTRDKDRQT (66 aa). Topologically, residues 1 to 92 are cytoplasmic; sequence MGDRGGAGSS…SLFSSDSGFS (92 aa). The involved in homomerization stretch occupies residues 1–96; it reads MGDRGGAGSS…SDSGFSNYRG (96 aa). Residue serine 20 is modified to Phosphoserine. A compositionally biased stretch (basic and acidic residues) spans 58 to 68; sequence HTRDKDRQTSV. A helical transmembrane segment spans residues 93–127; the sequence is NYRGILNWCVVMLILSNARLSLENLIKYGILVDPI. Residues 128–139 are Lumenal-facing; that stretch reads QVVSLFLKDPYS. The interval 128–139 is extracellular loop 1 (EL1); sequence QVVSLFLKDPYS. Residues 140 to 165 traverse the membrane as a helical segment; the sequence is WPAPCLIIASNIFIVATFQIEKRLSV. The interval 140-498 is MBOAT fold; the sequence is WPAPCLIIAS…VLNYDAPVGA (359 aa). The Cytoplasmic segment spans residues 166 to 170; that stretch reads GALTE. Residues 171–193 form a helical membrane-spanning segment; it reads QMGLLLHVVNLATIICFPAAVAL. At 194–200 the chain is on the lumenal side; sequence LVESITP. A helical membrane pass occupies residues 201-232; the sequence is VGSLFALASYSIIFLKLSSYRDVNLWCRQRRV. At 233-284 the chain is on the cytoplasmic side; sequence KAKAVSAGKKVSGAAAQNTVSYPDNLTYRDLYYFIFAPTLCYELNFPRSPRI. The intracellular loop 1 (IL1) stretch occupies residues 235-287; that stretch reads KAVSAGKKVSGAAAQNTVSYPDNLTYRDLYYFIFAPTLCYELNFPRSPRIRKR. The chain crosses the membrane as a helical span at residues 285–319; the sequence is RKRFLLRRVLEMLFFTQLQVGLIQQWMVPTIQNSM. Residues 320 to 326 lie on the Lumenal side of the membrane; it reads KPFKDMD. Residues 327–364 traverse the membrane as a helical segment; sequence YSRIIERLLKLAVPNHLIWLIFFYWLFHSCLNAVAELL. Over 365–410 the chain is Cytoplasmic; the sequence is QFGDREFYRDWWNAESVTYFWQNWNIPVHKWCIRHFYKPMLRLGSN. Positions 365–410 are intracellular loop 2 (IL2); the sequence is QFGDREFYRDWWNAESVTYFWQNWNIPVHKWCIRHFYKPMLRLGSN. The FYXDWWN motif signature appears at 371–377; sequence FYRDWWN. An acyl-CoA contacts are provided by residues 385-393, tyrosine 401, and arginine 415; that span reads WQNWNIPVH. Positions 391–405 are amphipathic helix (AH); it reads PVHKWCIRHFYKPML. Residues 411-431 form a helical membrane-spanning segment; that stretch reads KWMARTGVFWASAFFHEYLVS. The active site involves histidine 426. Residues 432-439 are Lumenal-facing; it reads IPLRMFRL. A helical transmembrane segment spans residues 440-458; that stretch reads WAFTAMMAQVPLAWIVNRF. At 459-460 the chain is on the cytoplasmic side; that stretch reads FQ. A helical transmembrane segment spans residues 461–492; that stretch reads GNYGNAAVWVTLIIGQPVAVLMYVHDYYVLNY. Tyrosine 488 is an an acyl-CoA binding site. The Lumenal segment spans residues 493-498; the sequence is DAPVGA.

This sequence belongs to the membrane-bound acyltransferase family. Sterol o-acyltransferase subfamily. In terms of assembly, homodimer or homotetramer; both forms have similar enzymatic activities.

The protein resides in the endoplasmic reticulum membrane. It carries out the reaction an acyl-CoA + a 1,2-diacyl-sn-glycerol = a triacyl-sn-glycerol + CoA. The catalysed reaction is all-trans-retinol + an acyl-CoA = an all-trans-retinyl ester + CoA. The enzyme catalyses 2-(9Z-octadecenoyl)-glycerol + (9Z)-octadecenoyl-CoA = 1,2-di-(9Z-octadecenoyl)-sn-glycerol + CoA. It catalyses the reaction 1,2-di-(9Z-octadecenoyl)-sn-glycerol + (9Z)-octadecenoyl-CoA = 1,2,3-tri-(9Z-octadecenoyl)-glycerol + CoA. It carries out the reaction all-trans-retinol + hexadecanoyl-CoA = all-trans-retinyl hexadecanoate + CoA. The catalysed reaction is 1-O-(9Z-octadecenyl)-glycerol + (9Z)-octadecenoyl-CoA = 1-O-(9Z-octadecyl)-3-(9Z-octadecenoyl)-glycerol + CoA. The enzyme catalyses 1-O-(9Z-octadecyl)-3-(9Z-octadecenoyl)-glycerol + (9Z)-octadecenoyl-CoA = 1-O-(9Z-octadecenyl)-2,3-di-(9Z-octadecenoyl)glycerol + CoA. It catalyses the reaction 1-(9Z-octadecenoyl)-glycerol + (9Z)-octadecenoyl-CoA = 1,2-di-(9Z-octadecenoyl)-glycerol + CoA. It carries out the reaction 1,2-di-(9Z-octadecenoyl)-glycerol + (9Z)-octadecenoate + H(+) = 1,2,3-tri-(9Z-octadecenoyl)-glycerol + H2O. The catalysed reaction is 1-octadecanoyl-2-(5Z,8Z,11Z,14Z-eicosatetraenoyl)-sn-glycerol + (9Z)-octadecenoyl-CoA = 1-octadecanoyl-2-(5Z,8Z,11Z,14Z)-eicosatetraenoyl-3-(9Z)-octadecenoyl-sn-glycerol + CoA. The enzyme catalyses hexadecane-1,2-diol + 2 hexadecanoyl-CoA = 1,2-O,O-dihexadecanoyl-1,2-hexadecanediol + 2 CoA. It catalyses the reaction hexadecane-1,2-diol + hexadecanoyl-CoA = 2-hydroxyhexadecyl hexadecanoate + CoA. It carries out the reaction 2-(9Z-octadecenoyl)-glycerol + hexadecanoyl-CoA = 1-hexadecanoyl-2-(9Z-octadecenoyl)-sn-glycerol + CoA. The catalysed reaction is 1,2-di-(9Z-octadecenoyl)-sn-glycerol + hexadecanoyl-CoA = 1,2-di-(9Z)-octadecenoyl-3-hexadecanoyl-sn-glycerol + CoA. The enzyme catalyses hexadecan-1-ol + hexadecanoyl-CoA = hexadecanyl hexadecanoate + CoA. It catalyses the reaction 13-cis-retinol + hexadecanoyl-CoA = 13-cis-retinyl hexadecanoate + CoA. It carries out the reaction 1,3-di-(9Z-octadecenoyl)-glycerol + (9Z)-octadecenoyl-CoA = 1,2,3-tri-(9Z-octadecenoyl)-glycerol + CoA. The catalysed reaction is 2,3-di-(9Z)-octadecenoyl-sn-glycerol + (9Z)-octadecenoyl-CoA = 1,2,3-tri-(9Z-octadecenoyl)-glycerol + CoA. The protein operates within lipid metabolism; glycerolipid metabolism. In terms of biological role, catalyzes the terminal and only committed step in triacylglycerol synthesis by using diacylglycerol and fatty acyl CoA as substrates. Highly expressed in epithelial cells of the small intestine and its activity is essential for the absorption of dietary fats. In liver, plays a role in esterifying exogenous fatty acids to glycerol, and is required to synthesize fat for storage. Also present in female mammary glands, where it produces fat in the milk. May be involved in VLDL (very low density lipoprotein) assembly. In contrast to DGAT2 it is not essential for survival. Functions as the major acyl-CoA retinol acyltransferase (ARAT) in the skin, where it acts to maintain retinoid homeostasis and prevent retinoid toxicity leading to skin and hair disorders. Exhibits additional acyltransferase activities, includin acyl CoA:monoacylglycerol acyltransferase (MGAT), wax monoester and wax diester synthases. Also able to use 1-monoalkylglycerol (1-MAkG) as an acyl acceptor for the synthesis of monoalkyl-monoacylglycerol (MAMAG). The polypeptide is Diacylglycerol O-acyltransferase 1 (Rattus norvegicus (Rat)).